Here is a 116-residue protein sequence, read N- to C-terminus: MNEKKQSRLRRAKSTRLHIRALGATRLCVNRTPRHIYAQVISADGGKVLAQASTLDTSLRSGTTGNVEAATKVGALIAERAKAAGVTKVAFDRSGFKYHGRIKALADAAREGGLEF.

Belongs to the universal ribosomal protein uL18 family. Part of the 50S ribosomal subunit; part of the 5S rRNA/L5/L18/L25 subcomplex. Contacts the 5S and 23S rRNAs.

This is one of the proteins that bind and probably mediate the attachment of the 5S RNA into the large ribosomal subunit, where it forms part of the central protuberance. This chain is Large ribosomal subunit protein uL18, found in Acinetobacter baylyi (strain ATCC 33305 / BD413 / ADP1).